The sequence spans 190 residues: Selenoprotein S (190 aa).

A compositionally biased stretch (basic and acidic residues) spans 1–13 (MEAEDGARVRNED). The interval 1–20 (MEAEDGARVRNEDVPPQNQD) is disordered. Residues 30–50 (AFMSEYGWYLLFGCVGVYLLI) traverse the membrane as a helical segment. A compositionally biased stretch (low complexity) spans 58–68 (SSTQTRSSSGS). Residues 58 to 190 (SSTQTRSSSG…RRGPSAGGUG (133 aa)) are disordered. Residues 79-120 (RRQEALEASRRRMQEEQDARAAEFREKQRMLEEEKRRQKIEM) show a composition bias toward basic and acidic residues. Residues 136-151 (VAQQNTEEAASSSSLR) are compositionally biased toward polar residues. Position 189 (U189) is a non-standard amino acid, selenocysteine.

The protein belongs to the selenoprotein S family.

Its subcellular location is the endoplasmic reticulum membrane. It is found in the cytoplasm. Involved in the degradation process of misfolded endoplasmic reticulum (ER) luminal proteins. Participates in the transfer of misfolded proteins from the ER to the cytosol, where they are destroyed by the proteasome in a ubiquitin-dependent manner. The sequence is that of Selenoprotein S (vimp) from Danio rerio (Zebrafish).